The following is a 134-amino-acid chain: Translation initiation factor 2 subunit beta (134 aa).

The span at 1–12 shows a compositional bias: basic and acidic residues; sequence MGYEEQLDRALE. The tract at residues 1-32 is disordered; it reads MGYEEQLDRALEETPDIEGTAARFSVPDPDVR.

It belongs to the eIF-2-beta/eIF-5 family. Heterotrimer composed of an alpha, a beta and a gamma chain.

EIF-2 functions in the early steps of protein synthesis by forming a ternary complex with GTP and initiator tRNA. This chain is Translation initiation factor 2 subunit beta, found in Natronomonas pharaonis (strain ATCC 35678 / DSM 2160 / CIP 103997 / JCM 8858 / NBRC 14720 / NCIMB 2260 / Gabara) (Halobacterium pharaonis).